The primary structure comprises 751 residues: Photosystem I P700 chlorophyll a apoprotein A1 (751 aa).

8 helical membrane-spanning segments follow: residues 73–96, 159–182, 198–222, 294–312, 349–372, 388–414, 436–458, and 533–551; these read VFSA…FHGA, LYTT…FHYH, LNHH…HVSL, TVHH…GHQY, WHAQ…HHMY, LSLF…IFMV, AMIS…LYIH, and FMVH…LILL. Positions 575 and 584 each coordinate [4Fe-4S] cluster. The next 2 helical transmembrane spans lie at 591–612 and 665–687; these read HVFL…HFSW and LSAY…MFLF. H676 contributes to the chlorophyll a' binding site. Chlorophyll a is bound by residues M684 and Y692. Residue W693 coordinates phylloquinone. The helical transmembrane segment at 725–745 threads the bilayer; that stretch reads AVGVAHYLLGGIATTWSFFLA.

This sequence belongs to the PsaA/PsaB family. In terms of assembly, the PsaA/B heterodimer binds the P700 chlorophyll special pair and subsequent electron acceptors. PSI consists of a core antenna complex that captures photons, and an electron transfer chain that converts photonic excitation into a charge separation. The eukaryotic PSI reaction center is composed of at least 11 subunits. The cofactor is P700 is a chlorophyll a/chlorophyll a' dimer, A0 is one or more chlorophyll a, A1 is one or both phylloquinones and FX is a shared 4Fe-4S iron-sulfur center..

It localises to the plastid. It is found in the chloroplast thylakoid membrane. The catalysed reaction is reduced [plastocyanin] + hnu + oxidized [2Fe-2S]-[ferredoxin] = oxidized [plastocyanin] + reduced [2Fe-2S]-[ferredoxin]. PsaA and PsaB bind P700, the primary electron donor of photosystem I (PSI), as well as the electron acceptors A0, A1 and FX. PSI is a plastocyanin/cytochrome c6-ferredoxin oxidoreductase, converting photonic excitation into a charge separation, which transfers an electron from the donor P700 chlorophyll pair to the spectroscopically characterized acceptors A0, A1, FX, FA and FB in turn. Oxidized P700 is reduced on the lumenal side of the thylakoid membrane by plastocyanin or cytochrome c6. This is Photosystem I P700 chlorophyll a apoprotein A1 from Chlorella vulgaris (Green alga).